Reading from the N-terminus, the 242-residue chain is NADH-quinone oxidoreductase subunit C (242 aa).

The segment at 67–101 (VVNSVGLGHKEQGAKPITNRRTTSDNVGESKSIDY) is insert.

Belongs to the complex I 30 kDa subunit family. In terms of assembly, NDH-1 is composed of 14 different subunits. Subunits NuoB, C, D, E, F, and G constitute the peripheral sector of the complex.

It is found in the cell inner membrane. The catalysed reaction is a quinone + NADH + 5 H(+)(in) = a quinol + NAD(+) + 4 H(+)(out). In terms of biological role, NDH-1 shuttles electrons from NADH, via FMN and iron-sulfur (Fe-S) centers, to quinones in the respiratory chain. The immediate electron acceptor for the enzyme in this species is believed to be ubiquinone. Couples the redox reaction to proton translocation (for every two electrons transferred, four hydrogen ions are translocated across the cytoplasmic membrane), and thus conserves the redox energy in a proton gradient. This chain is NADH-quinone oxidoreductase subunit C, found in Rickettsia conorii (strain ATCC VR-613 / Malish 7).